Consider the following 588-residue polypeptide: Tetratricopeptide repeat protein 39B (588 aa).

TPR repeat units lie at residues 294 to 327, 485 to 518, and 526 to 559; these read SIIL…QQEW, CLVQ…EKRV, and PFTF…YKDY.

Belongs to the TTC39 family.

Functionally, may be involved in lipid metabolism. In Xenopus tropicalis (Western clawed frog), this protein is Tetratricopeptide repeat protein 39B (ttc39b).